We begin with the raw amino-acid sequence, 168 residues long: uncharacterized protein (168 aa).

One can recognise an N-acetyltransferase domain in the interval 7–168; it reads ERIDTLKTGD…TAKGWPDISM (162 aa).

This is an uncharacterized protein from Azospirillum brasilense.